Consider the following 228-residue polypeptide: Uracil-DNA glycosylase (228 aa).

The active-site Proton acceptor is Asp-64.

It belongs to the uracil-DNA glycosylase (UDG) superfamily. UNG family.

The protein localises to the cytoplasm. It catalyses the reaction Hydrolyzes single-stranded DNA or mismatched double-stranded DNA and polynucleotides, releasing free uracil.. Its function is as follows. Excises uracil residues from the DNA which can arise as a result of misincorporation of dUMP residues by DNA polymerase or due to deamination of cytosine. The chain is Uracil-DNA glycosylase from Pectobacterium carotovorum subsp. carotovorum (strain PC1).